Consider the following 348-residue polypeptide: Dihydroorotase (348 aa).

Residues H17 and H19 each coordinate Zn(2+). Substrate contacts are provided by residues 19–21 (HLR) and N45. 3 residues coordinate Zn(2+): K103, H140, and H178. K103 is subject to N6-carboxylysine. H140 provides a ligand contact to substrate. L223 is a binding site for substrate. D251 is a binding site for Zn(2+). The active site involves D251. The substrate site is built by H255 and A267.

The protein belongs to the metallo-dependent hydrolases superfamily. DHOase family. Class II DHOase subfamily. As to quaternary structure, homodimer. It depends on Zn(2+) as a cofactor.

It catalyses the reaction (S)-dihydroorotate + H2O = N-carbamoyl-L-aspartate + H(+). It functions in the pathway pyrimidine metabolism; UMP biosynthesis via de novo pathway; (S)-dihydroorotate from bicarbonate: step 3/3. In terms of biological role, catalyzes the reversible cyclization of carbamoyl aspartate to dihydroorotate. The polypeptide is Dihydroorotase (Salmonella arizonae (strain ATCC BAA-731 / CDC346-86 / RSK2980)).